We begin with the raw amino-acid sequence, 592 residues long: MNNGRIVRINGPLVVADNMKNAQMYEVVEVGEPRLIGEITRIEGDRAFIQVYEDTSGIKPNEPVYRTGAPLSIELGPGLIGKIFDGLQRPLDSIKELTKSPFIARGIKVPSVDRKTKWHFIPKVKKGDKIEGGDIIGIVNETPLVEHRILVPPYVHGTLKEIVAEGDYTVEDPIAVVDMNGDEVPIKLMQRWPVRIPRPFKEKLEPTEPLLTGTRVLDTIFPIAKGGTAAIPGPFGSGKTVTLQSLAKWSAAKIVIYVGCGERGNEMTDELRQFPSLKDPWTGRPLLERTILVANTSNMPVAAREASIYVGITMAEYFRDQGYDTLLVADSTSRWAEALRDLGGRMEEMPAEEGFPSYLPSRLAEYYERAGRVKTVGKPERFGSVTVASAVSPPGGDFTEPVTSQTLRFVKVFWPLDVSLAQARHYPAINWLQGFSAYVDLVANWWNTNVDPKWREMRDMMVRTLIREDELRQIVRLVGPESLAEKDKLVLETARLIKEAFLKQNAYDDIDAFSSPQKQARVMRLIYLFNTHASRLVERGIPTKKIVDSMGQLLPEIIRSKAAIKNDELNKYDELERKLISVFENLEKEAGT.

233–240 is a binding site for ATP; it reads GPFGSGKT.

The protein belongs to the ATPase alpha/beta chains family. In terms of assembly, has multiple subunits with at least A(3), B(3), C, D, E, F, H, I and proteolipid K(x).

The protein localises to the cell membrane. It carries out the reaction ATP + H2O + 4 H(+)(in) = ADP + phosphate + 5 H(+)(out). Component of the A-type ATP synthase that produces ATP from ADP in the presence of a proton gradient across the membrane. The A chain is the catalytic subunit. This is A-type ATP synthase subunit A from Saccharolobus islandicus (strain M.16.27) (Sulfolobus islandicus).